We begin with the raw amino-acid sequence, 423 residues long: Innexin eat-5 (423 aa).

4 helical membrane passes run 25–41 (YYYSTLIIMGMSLTITA), 102–122 (PFIMAIEAAFFYLPVIFWSML), 277–297 (IFLFLYIWFLLVFFVTLFDSI), and 341–361 (HSILLSEFCLHKFTPDIIILL).

It belongs to the pannexin family. As to quaternary structure, heterooligomer of eat-5 and another innexin. As to expression, expressed in pharyngeal muscles.

Its subcellular location is the cell membrane. The protein localises to the cell junction. It is found in the gap junction. Structural component of the gap junctions. Required for synchronized pharyngeal muscle contractions. The chain is Innexin eat-5 (eat-5) from Caenorhabditis elegans.